Here is a 232-residue protein sequence, read N- to C-terminus: 5'-methylthioadenosine/S-adenosylhomocysteine nucleosidase (232 aa).

Glu-12 serves as the catalytic Proton acceptor. Residues Gly-78, Ile-152, and Met-173–Glu-174 each bind substrate. The active-site Proton donor is Asp-197.

This sequence belongs to the PNP/UDP phosphorylase family. MtnN subfamily. As to quaternary structure, homodimer.

It catalyses the reaction S-adenosyl-L-homocysteine + H2O = S-(5-deoxy-D-ribos-5-yl)-L-homocysteine + adenine. It carries out the reaction S-methyl-5'-thioadenosine + H2O = 5-(methylsulfanyl)-D-ribose + adenine. The enzyme catalyses 5'-deoxyadenosine + H2O = 5-deoxy-D-ribose + adenine. The protein operates within amino-acid biosynthesis; L-methionine biosynthesis via salvage pathway; S-methyl-5-thio-alpha-D-ribose 1-phosphate from S-methyl-5'-thioadenosine (hydrolase route): step 1/2. Catalyzes the irreversible cleavage of the glycosidic bond in both 5'-methylthioadenosine (MTA) and S-adenosylhomocysteine (SAH/AdoHcy) to adenine and the corresponding thioribose, 5'-methylthioribose and S-ribosylhomocysteine, respectively. Also cleaves 5'-deoxyadenosine, a toxic by-product of radical S-adenosylmethionine (SAM) enzymes, into 5-deoxyribose and adenine. Thus, is required for in vivo function of the radical SAM enzymes biotin synthase and lipoic acid synthase, that are inhibited by 5'-deoxyadenosine accumulation. The chain is 5'-methylthioadenosine/S-adenosylhomocysteine nucleosidase from Salmonella arizonae (strain ATCC BAA-731 / CDC346-86 / RSK2980).